A 172-amino-acid polypeptide reads, in one-letter code: Nucleoside-triphosphatase THEP1 (172 aa).

ATP is bound by residues 11 to 18 (GKPGIGKT) and 101 to 108 (IILIDEIG).

The protein belongs to the THEP1 NTPase family.

The catalysed reaction is a ribonucleoside 5'-triphosphate + H2O = a ribonucleoside 5'-diphosphate + phosphate + H(+). Has nucleotide phosphatase activity towards ATP, GTP, CTP, TTP and UTP. May hydrolyze nucleoside diphosphates with lower efficiency. This is Nucleoside-triphosphatase THEP1 from Sulfolobus acidocaldarius (strain ATCC 33909 / DSM 639 / JCM 8929 / NBRC 15157 / NCIMB 11770).